The chain runs to 169 residues: Thaumatin-like pathogenesis-related protein 3 (169 aa).

An N-terminal signal peptide occupies residues 1 to 21 (MATSSAVLFLLLAVFAAGASA).

The protein belongs to the thaumatin family.

Functionally, associated with resistance against stem rust fungi. The polypeptide is Thaumatin-like pathogenesis-related protein 3 (RASTL-3) (Avena sativa (Oat)).